The chain runs to 311 residues: Protoheme IX farnesyltransferase (311 aa).

Helical transmembrane passes span V33–A53, L55–V75, N104–I124, L127–L147, I155–G175, G181–L201, I228–M248, Y252–V272, and I287–P307.

This sequence belongs to the UbiA prenyltransferase family. Protoheme IX farnesyltransferase subfamily.

The protein resides in the cell inner membrane. The enzyme catalyses heme b + (2E,6E)-farnesyl diphosphate + H2O = Fe(II)-heme o + diphosphate. Its pathway is porphyrin-containing compound metabolism; heme O biosynthesis; heme O from protoheme: step 1/1. Converts heme B (protoheme IX) to heme O by substitution of the vinyl group on carbon 2 of heme B porphyrin ring with a hydroxyethyl farnesyl side group. The chain is Protoheme IX farnesyltransferase from Teredinibacter turnerae (strain ATCC 39867 / T7901).